The following is a 188-amino-acid chain: Putative protein SSX6 (188 aa).

Disordered regions lie at residues M1–S22 and K74–K188. Residues K20 to D83 enclose the KRAB-related domain. Basic and acidic residues-rich tracts occupy residues R75–R96 and M112–D122. S123 is subject to Phosphoserine. Residues S147–G156 show a composition bias toward basic and acidic residues. The segment covering P157–E170 has biased composition (basic residues). Residues E179–K188 show a composition bias toward acidic residues.

It belongs to the SSX family. Not detected in any normal tissues. Expressed in a melanoma cell line.

Could act as a modulator of transcription. This Homo sapiens (Human) protein is Putative protein SSX6.